The chain runs to 1081 residues: Histone demethylase-like protein A (1081 aa).

The interval 37 to 173 (QHLQHPSLPN…LSGNTDYARY (137 aa)) is disordered. Positions 66–81 (SPSCNESNESNGETSS) are enriched in low complexity. The span at 119-132 (DTSNILSGSATSVS) shows a compositional bias: polar residues. Residues 141–161 (NSTPPSTVNNVPSSSSITSDS) are compositionally biased toward low complexity. The SWIRM domain maps to 192-287 (CVTAAYACRL…FGCVEIPPAL (96 aa)). Positions 902–940 (ATAQKKKEPPCSNGFSAPVSTSAHPTDASAPARSNNSFS) are disordered. The segment covering 914 to 925 (NGFSAPVSTSAH) has biased composition (polar residues). The segment at residues 969-1049 (ARTGLNPFLL…TNTEIWDRWK (81 aa)) is a DNA-binding region (HMG box).

This sequence belongs to the flavin monoamine oxidase family.

It localises to the nucleus. H3K4 demethylase-like protein. Might not act as a H3K4 demethylase or is not the major H3K4 demethylase since its deletion does not affect whole genome H3K4 methylation. This Aspergillus fumigatus (strain ATCC MYA-4609 / CBS 101355 / FGSC A1100 / Af293) (Neosartorya fumigata) protein is Histone demethylase-like protein A.